We begin with the raw amino-acid sequence, 621 residues long: 1-deoxy-D-xylulose-5-phosphate synthase (621 aa).

Thiamine diphosphate-binding positions include His80 and 121–123; that span reads GHS. Asp152 lines the Mg(2+) pocket. Thiamine diphosphate is bound by residues 153–154, Asn181, Tyr288, and Glu370; that span reads GA. Asn181 provides a ligand contact to Mg(2+).

The protein belongs to the transketolase family. DXPS subfamily. Homodimer. The cofactor is Mg(2+). Requires thiamine diphosphate as cofactor.

It catalyses the reaction D-glyceraldehyde 3-phosphate + pyruvate + H(+) = 1-deoxy-D-xylulose 5-phosphate + CO2. Its pathway is metabolic intermediate biosynthesis; 1-deoxy-D-xylulose 5-phosphate biosynthesis; 1-deoxy-D-xylulose 5-phosphate from D-glyceraldehyde 3-phosphate and pyruvate: step 1/1. In terms of biological role, catalyzes the acyloin condensation reaction between C atoms 2 and 3 of pyruvate and glyceraldehyde 3-phosphate to yield 1-deoxy-D-xylulose-5-phosphate (DXP). The polypeptide is 1-deoxy-D-xylulose-5-phosphate synthase (Shewanella frigidimarina (strain NCIMB 400)).